Reading from the N-terminus, the 557-residue chain is Formate--tetrahydrofolate ligase 2 (557 aa).

66 to 73 is an ATP binding site; that stretch reads TPAGEGKT.

Belongs to the formate--tetrahydrofolate ligase family.

It catalyses the reaction (6S)-5,6,7,8-tetrahydrofolate + formate + ATP = (6R)-10-formyltetrahydrofolate + ADP + phosphate. Its pathway is one-carbon metabolism; tetrahydrofolate interconversion. The sequence is that of Formate--tetrahydrofolate ligase 2 from Streptococcus pyogenes serotype M18 (strain MGAS8232).